Consider the following 139-residue polypeptide: MAIIGIGIDIVNLERINKIILCYGNKFVKKILSFNEKKKYYELKNKKKNISVNFLAKRLAAKEAASKAFGLGMKKGLYFSQFEVLNNNLGKPYFKFNNTAKNLIKALNITNIHLSLTDERKYACATVIFEDNRTNIILS.

Residues D9 and E63 each coordinate Mg(2+).

This sequence belongs to the P-Pant transferase superfamily. AcpS family. The cofactor is Mg(2+).

Its subcellular location is the cytoplasm. The catalysed reaction is apo-[ACP] + CoA = holo-[ACP] + adenosine 3',5'-bisphosphate + H(+). Its function is as follows. Transfers the 4'-phosphopantetheine moiety from coenzyme A to a Ser of acyl-carrier-protein. This Wigglesworthia glossinidia brevipalpis protein is Holo-[acyl-carrier-protein] synthase.